Here is a 107-residue protein sequence, read N- to C-terminus: Urease subunit beta (107 aa).

The protein belongs to the urease beta subunit family. Heterotrimer of UreA (gamma), UreB (beta) and UreC (alpha) subunits. Three heterotrimers associate to form the active enzyme.

It localises to the cytoplasm. It catalyses the reaction urea + 2 H2O + H(+) = hydrogencarbonate + 2 NH4(+). It functions in the pathway nitrogen metabolism; urea degradation; CO(2) and NH(3) from urea (urease route): step 1/1. The polypeptide is Urease subunit beta (Teredinibacter turnerae (strain ATCC 39867 / T7901)).